Here is a 261-residue protein sequence, read N- to C-terminus: Ribonuclease HII (261 aa).

Residues H71–L260 enclose the RNase H type-2 domain. Residues D77, E78, and D169 each contribute to the a divalent metal cation site.

This sequence belongs to the RNase HII family. It depends on Mn(2+) as a cofactor. Requires Mg(2+) as cofactor.

The protein resides in the cytoplasm. The catalysed reaction is Endonucleolytic cleavage to 5'-phosphomonoester.. Functionally, endonuclease that specifically degrades the RNA of RNA-DNA hybrids. This is Ribonuclease HII from Oceanobacillus iheyensis (strain DSM 14371 / CIP 107618 / JCM 11309 / KCTC 3954 / HTE831).